The chain runs to 236 residues: MESRKGIKEVSMNFLDQLDAIIQNKHMLEHPFYMKWSKGELTKEQLQAYAKDYYLHIKAFPKYLSAIHSRCDDLEARKLLLDNLMDEENGYPNHIDLWKQFVFALGVSSEELEAHEPSEAAKAKVATFMRWCTGDSLAAGVAALYSYESQIPCVAKEKIRGLIEYFGFSNPEDYAYFTEHEEADVRHAREEKALIEMLSRDDSDKVLEASREVTQSLYGFLDSFLEPATCCHCHKA.

Glu-87, His-94, Glu-148, His-180, Asp-184, and His-187 together coordinate Fe(2+).

This sequence belongs to the CADD family. As to quaternary structure, homodimer. Requires Fe(2+) as cofactor. Mn(2+) serves as cofactor.

Involved in de novo para-aminobenzoate (PABA) biosynthesis. Acts as a self-sacrificing or 'suicide' enzyme that utilizes its own active site tyrosine residue(s) as the substrate for PABA synthesis. The side chain of the tyrosine residue is released from the protein backbone via cleavage of the C(alpha)-C(beta) bond, leaving a glycine in place of the original tyrosine residue. Reaction requires O(2) and a reduced dimetal cofactor. In Chlamydia muridarum (strain MoPn / Nigg), this protein is 4-aminobenzoate synthase.